Here is a 277-residue protein sequence, read N- to C-terminus: Type II restriction enzyme RsrI (277 aa).

The protein belongs to the EcoRI type II restriction endonuclease family. Homodimer. It depends on Mg(2+) as a cofactor.

It carries out the reaction Endonucleolytic cleavage of DNA to give specific double-stranded fragments with terminal 5'-phosphates.. Functionally, a P subtype restriction enzyme that recognizes the double-stranded sequence 5'-GAATTC-3' and cleaves after G-1. This is Type II restriction enzyme RsrI (rsrIR) from Cereibacter sphaeroides (Rhodobacter sphaeroides).